The chain runs to 403 residues: Tyrosine--tRNA ligase (403 aa).

The 'HIGH' region motif lies at 42-51 (PTAPDLHLGH). The 'KMSKS' region signature appears at 226 to 230 (KMSKS). Lys229 is a binding site for ATP. The 62-residue stretch at 339–400 (LRLAGLLTAA…GKRNFARVSL (62 aa)) folds into the S4 RNA-binding domain.

The protein belongs to the class-I aminoacyl-tRNA synthetase family. TyrS type 2 subfamily. Homodimer.

The protein resides in the cytoplasm. It carries out the reaction tRNA(Tyr) + L-tyrosine + ATP = L-tyrosyl-tRNA(Tyr) + AMP + diphosphate + H(+). Catalyzes the attachment of tyrosine to tRNA(Tyr) in a two-step reaction: tyrosine is first activated by ATP to form Tyr-AMP and then transferred to the acceptor end of tRNA(Tyr). The polypeptide is Tyrosine--tRNA ligase (Xanthomonas axonopodis pv. citri (strain 306)).